Here is a 36-residue protein sequence, read N- to C-terminus: Photosystem II reaction center protein M (36 aa).

The residue at position 1 (Met1) is a Blocked amino end (Met). Over 1–11 the chain is Lumenal; it reads MEVNQLGFIAT. The chain crosses the membrane as a helical span at residues 12 to 27; it reads ALFVLVPSVFLIILYV. The Cytoplasmic portion of the chain corresponds to 28 to 36; sequence QTESQQKSS.

Belongs to the PsbM family. As to quaternary structure, PSII is composed of 1 copy each of membrane proteins PsbA, PsbB, PsbC, PsbD, PsbE, PsbF, PsbH, PsbI, PsbJ, PsbK, PsbL, PsbM, PsbT, PsbX, PsbY, PsbZ, Psb30/Ycf12, peripheral proteins PsbO, CyanoQ (PsbQ), PsbU, PsbV, PsbU, PsbV and a large number of cofactors. It forms dimeric complexes. PSII binds multiple chlorophylls, carotenoids and specific lipids. is required as a cofactor.

The protein resides in the cellular thylakoid membrane. Functionally, one of the components of the core complex of photosystem II (PSII). PSII is a light-driven water:plastoquinone oxidoreductase that uses light energy to abstract electrons from H(2)O, generating O(2) and a proton gradient subsequently used for ATP formation. It consists of a core antenna complex that captures photons, and an electron transfer chain that converts photonic excitation into a charge separation. This subunit is found at the monomer-monomer interface. Probably involved in dimerization of PSII; at the monomer-monomer interface the only protein-protein contacts observed are between the 2 PsbM subunits. Lipids, chlorophylls and carotenoids contribute strongly to PSII dimerization. In Thermostichus vulcanus (Synechococcus vulcanus), this protein is Photosystem II reaction center protein M.